Here is a 100-residue protein sequence, read N- to C-terminus: Urease subunit gamma (100 aa).

It belongs to the urease gamma subunit family. Heterotrimer of UreA (gamma), UreB (beta) and UreC (alpha) subunits. Three heterotrimers associate to form the active enzyme.

The protein resides in the cytoplasm. It catalyses the reaction urea + 2 H2O + H(+) = hydrogencarbonate + 2 NH4(+). It participates in nitrogen metabolism; urea degradation; CO(2) and NH(3) from urea (urease route): step 1/1. The sequence is that of Urease subunit gamma from Cyanothece sp. (strain PCC 7425 / ATCC 29141).